Here is a 787-residue protein sequence, read N- to C-terminus: Protein translocase subunit SecA (787 aa).

Residues Gln85, 103–107 (GEGKT), and Asp492 contribute to the ATP site.

The protein belongs to the SecA family. As to quaternary structure, monomer and homodimer. Part of the essential Sec protein translocation apparatus which comprises SecA, SecYEG and auxiliary proteins SecDF. Other proteins may also be involved.

The protein resides in the cell membrane. It localises to the cytoplasm. The enzyme catalyses ATP + H2O + cellular proteinSide 1 = ADP + phosphate + cellular proteinSide 2.. Functionally, part of the Sec protein translocase complex. Interacts with the SecYEG preprotein conducting channel. Has a central role in coupling the hydrolysis of ATP to the transfer of proteins into and across the cell membrane, serving as an ATP-driven molecular motor driving the stepwise translocation of polypeptide chains across the membrane. This chain is Protein translocase subunit SecA, found in Lacticaseibacillus casei (strain BL23) (Lactobacillus casei).